The following is a 207-amino-acid chain: MSLLIEQARYHLSAHNARQLPDDGGYEVAFAGRSNAGKSSALNALTRQNALARVSKTPGRTQQLVFFQIQPERYLVDLPGYGYAKVPQDLQAHWQAFIDRYFRTREALRGLVVVMDIRHPLKDYDLQMLGYAAERGLPAHGLLTKADKLGRGQQMQTLQKVKKEVTSRFGDSVTVQTYSGESRQGVDELRAIVGAWLGLDVETTAAE.

Positions 24–199 constitute an EngB-type G domain; the sequence is GGYEVAFAGR…RAIVGAWLGL (176 aa). GTP-binding positions include 32–39, 59–63, 77–80, 144–147, and 178–180; these read GRSNAGKS, GRTQQ, DLPG, TKAD, and YSG. Residues serine 39 and threonine 61 each contribute to the Mg(2+) site.

The protein belongs to the TRAFAC class TrmE-Era-EngA-EngB-Septin-like GTPase superfamily. EngB GTPase family. Mg(2+) is required as a cofactor.

Necessary for normal cell division and for the maintenance of normal septation. This Xanthomonas euvesicatoria pv. vesicatoria (strain 85-10) (Xanthomonas campestris pv. vesicatoria) protein is Probable GTP-binding protein EngB.